Here is a 476-residue protein sequence, read N- to C-terminus: Serine/threonine-protein kinase chk-2 (476 aa).

The FHA domain occupies 66 to 127 (FVCGRGSDDA…NGTLVNQEMI (62 aa)). Positions 170–436 (HVTSHSLGKG…AVELMSTQWM (267 aa)) constitute a Protein kinase domain. Residues 177 to 184 (GKGGFGKV), lysine 199, and 252 to 258 (EYVGGGE) contribute to the ATP site. The Proton acceptor role is filled by aspartate 301. ATP is bound by residues 305–306 (EN) and aspartate 322.

This sequence belongs to the protein kinase superfamily. CAMK Ser/Thr protein kinase family. CHK2 subfamily. Mg(2+) is required as a cofactor. Highly expressed in germline tissue.

The protein resides in the nucleus. The catalysed reaction is L-seryl-[protein] + ATP = O-phospho-L-seryl-[protein] + ADP + H(+). It catalyses the reaction L-threonyl-[protein] + ATP = O-phospho-L-threonyl-[protein] + ADP + H(+). Functionally, serine/threonine-protein kinase which is required for checkpoint-mediated cell cycle arrest, activation of DNA repair and apoptosis in response to the presence of DNA double-strand breaks. May also negatively regulate cell cycle progression during unperturbed cell cycles. Phosphorylates and inhibits cdc25 phosphatase, preventing entry into mitosis. Required for nuclear reorganization and homologous chromosome pairing during meiotic prophase. This is Serine/threonine-protein kinase chk-2 (chk-2) from Caenorhabditis elegans.